Reading from the N-terminus, the 704-residue chain is DNA ligase (704 aa).

NAD(+)-binding positions include 43–47, 92–93, and Glu124; these read DADYD and SL. Residue Lys126 is the N6-AMP-lysine intermediate of the active site. NAD(+)-binding residues include Arg147, Glu182, Lys298, and Lys322. Positions 427, 430, 445, and 451 each coordinate Zn(2+). A BRCT domain is found at 625 to 704; sequence PVASPVAGRI…DGWLRLIGDA (80 aa).

Belongs to the NAD-dependent DNA ligase family. LigA subfamily. The cofactor is Mg(2+). Mn(2+) serves as cofactor.

The catalysed reaction is NAD(+) + (deoxyribonucleotide)n-3'-hydroxyl + 5'-phospho-(deoxyribonucleotide)m = (deoxyribonucleotide)n+m + AMP + beta-nicotinamide D-nucleotide.. Functionally, DNA ligase that catalyzes the formation of phosphodiester linkages between 5'-phosphoryl and 3'-hydroxyl groups in double-stranded DNA using NAD as a coenzyme and as the energy source for the reaction. It is essential for DNA replication and repair of damaged DNA. The polypeptide is DNA ligase (Cereibacter sphaeroides (strain KD131 / KCTC 12085) (Rhodobacter sphaeroides)).